We begin with the raw amino-acid sequence, 22 residues long: MICOS complex subunit MIC60 (22 aa).

It belongs to the MICOS complex subunit Mic60 family. As to quaternary structure, component of the mitochondrial contact site and cristae organizing system (MICOS) complex, composed of at least MICOS10/MIC10, CHCHD3/MIC19, CHCHD6/MIC25, APOOL/MIC27, IMMT/MIC60, APOO/MIC23/MIC26 and MICOS13/MIC13. This complex was also known under the names MINOS or MitOS complex. The MICOS complex associates with mitochondrial outer membrane proteins SAMM50, MTX1 and MTX2 (together described as components of the mitochondrial outer membrane sorting assembly machinery (SAM) complex) and DNAJC11, mitochondrial inner membrane protein TMEM11 and with HSPA9. The MICOS and SAM complexes together with DNAJC11 are part of a large protein complex spanning both membranes termed the mitochondrial intermembrane space bridging (MIB) complex. Interacts with HSPA1A/HSPA1B and OPA1, preferentially with the soluble OPA1 form. Interacts with MICOS13/MIC13, MICOS10/MIC10, CHCHD3/MIC19, CHCHD6/MIC25, SAMM50 and TMEM11. Interacts with APOO/MIC23/MIC26 and APOOL/MIC27. Interacts with ARMC1. Interacts with ARMC12.

The protein localises to the mitochondrion inner membrane. The protein resides in the mitochondrion. Component of the MICOS complex, a large protein complex of the mitochondrial inner membrane that plays crucial roles in the maintenance of crista junctions, inner membrane architecture, and formation of contact sites to the outer membrane. Plays an important role in the maintenance of the MICOS complex stability and the mitochondrial cristae morphology. The polypeptide is MICOS complex subunit MIC60 (Mesocricetus auratus (Golden hamster)).